Reading from the N-terminus, the 557-residue chain is Kelch repeat and BTB domain-containing protein 2 (557 aa).

One can recognise a BTB domain in the interval 26–95 (CDVIITIGDG…LYNRHISSMN (70 aa)). Residues 133 to 223 (HKLYEMVHIP…CIDIQNLDKK (91 aa)) form the BACK domain. Kelch repeat units follow at residues 305 to 352 (EIII…VIDD), 353 to 399 (TIYA…VLDQ), and 401 to 464 (IYII…SHKD).

As to quaternary structure, interacts (via BTB domain) with host CUL3.

The protein localises to the host cytoplasm. In terms of biological role, probable substrate-specific adapter of CUL3-containing E3 ubiquitin-protein ligases which mediate the ubiquitination and subsequent proteasomal degradation of host target proteins. The chain is Kelch repeat and BTB domain-containing protein 2 (KBTB2) from Bos taurus (Bovine).